The following is a 307-amino-acid chain: Putative gluconeogenesis factor (307 aa).

This sequence belongs to the gluconeogenesis factor family.

The protein localises to the cytoplasm. In terms of biological role, required for morphogenesis under gluconeogenic growth conditions. This is Putative gluconeogenesis factor from Yersinia pestis.